Consider the following 257-residue polypeptide: Discoidin-2 (257 aa).

The interval 1-155 (MSVPAGSVSC…SLRWELYALP (155 aa)) is beta-sandwich. One can recognise an F5/8 type C domain in the interval 10–154 (CLANALLNLR…ISLRWELYAL (145 aa)). 3 residues coordinate Ca(2+): N39, S40, and D47. Residues 81–83 (RGD) carry the Cell attachment site motif. Position 84 is a phosphohistidine (H84). The interval 156–162 (VKSYSNP) is linker. Residues 163-257 (SVQVGEVSIG…FDYVAVEFNN (95 aa)) form a lectin-like region. D209, R218, and W238 together coordinate a carbohydrate.

In terms of assembly, homotrimer. Post-translationally, the N-terminus is blocked. As to expression, maturing spore cells.

In terms of biological role, galactose-binding lectin. May be necessary for the primary process of spore formation and may be involved in spore coat formation. In Dictyostelium discoideum (Social amoeba), this protein is Discoidin-2 (dscE).